The following is a 217-amino-acid chain: Small ribosomal subunit protein uS3 (217 aa).

Residues 40-110 (IRDLINKWFN…EVYINIHEVR (71 aa)) form the KH type-2 domain.

Belongs to the universal ribosomal protein uS3 family. In terms of assembly, part of the 30S ribosomal subunit. Forms a tight complex with proteins S10 and S14.

Binds the lower part of the 30S subunit head. Binds mRNA in the 70S ribosome, positioning it for translation. This is Small ribosomal subunit protein uS3 from Rickettsia prowazekii (strain Madrid E).